We begin with the raw amino-acid sequence, 122 residues long: Large ribosomal subunit protein uL14 (122 aa).

It belongs to the universal ribosomal protein uL14 family. As to quaternary structure, part of the 50S ribosomal subunit. Forms a cluster with proteins L3 and L19. In the 70S ribosome, L14 and L19 interact and together make contacts with the 16S rRNA in bridges B5 and B8.

Functionally, binds to 23S rRNA. Forms part of two intersubunit bridges in the 70S ribosome. The sequence is that of Large ribosomal subunit protein uL14 from Thermodesulfovibrio yellowstonii (strain ATCC 51303 / DSM 11347 / YP87).